The sequence spans 166 residues: Large ribosomal subunit protein uL10 (166 aa).

The protein belongs to the universal ribosomal protein uL10 family. As to quaternary structure, part of the ribosomal stalk of the 50S ribosomal subunit. The N-terminus interacts with L11 and the large rRNA to form the base of the stalk. The C-terminus forms an elongated spine to which L12 dimers bind in a sequential fashion forming a multimeric L10(L12)X complex.

Forms part of the ribosomal stalk, playing a central role in the interaction of the ribosome with GTP-bound translation factors. The sequence is that of Large ribosomal subunit protein uL10 from Ectopseudomonas mendocina (strain ymp) (Pseudomonas mendocina).